The chain runs to 341 residues: Tetraacyldisaccharide 4'-kinase (341 aa).

57 to 64 (TVGGTGKT) provides a ligand contact to ATP.

It belongs to the LpxK family.

The catalysed reaction is a lipid A disaccharide + ATP = a lipid IVA + ADP + H(+). It participates in glycolipid biosynthesis; lipid IV(A) biosynthesis; lipid IV(A) from (3R)-3-hydroxytetradecanoyl-[acyl-carrier-protein] and UDP-N-acetyl-alpha-D-glucosamine: step 6/6. Functionally, transfers the gamma-phosphate of ATP to the 4'-position of a tetraacyldisaccharide 1-phosphate intermediate (termed DS-1-P) to form tetraacyldisaccharide 1,4'-bis-phosphate (lipid IVA). This Maricaulis maris (strain MCS10) (Caulobacter maris) protein is Tetraacyldisaccharide 4'-kinase.